Here is a 90-residue protein sequence, read N- to C-terminus: Probable Fe(2+)-trafficking protein (90 aa).

Belongs to the Fe(2+)-trafficking protein family.

Could be a mediator in iron transactions between iron acquisition and iron-requiring processes, such as synthesis and/or repair of Fe-S clusters in biosynthetic enzymes. This Aliivibrio salmonicida (strain LFI1238) (Vibrio salmonicida (strain LFI1238)) protein is Probable Fe(2+)-trafficking protein.